A 423-amino-acid chain; its full sequence is UPF0229 protein PSPTO_0546 (423 aa).

Positions 65-110 are disordered; it reads HHGRGGKQTVVHPGNKEFTTGEHIARPQGGAGGKGPGKAGNSGEGM. Residues 93–107 show a composition bias toward gly residues; it reads GGAGGKGPGKAGNSG.

Belongs to the UPF0229 family.

The sequence is that of UPF0229 protein PSPTO_0546 from Pseudomonas syringae pv. tomato (strain ATCC BAA-871 / DC3000).